Here is a 601-residue protein sequence, read N- to C-terminus: Elongation factor 4 (601 aa).

The tr-type G domain maps to 7–189 (SNIRNFSIVA…AIVHRLPPPQ (183 aa)). Residues 19 to 24 (DHGKST) and 136 to 139 (NKVD) each bind GTP.

Belongs to the TRAFAC class translation factor GTPase superfamily. Classic translation factor GTPase family. LepA subfamily.

It localises to the cell inner membrane. The enzyme catalyses GTP + H2O = GDP + phosphate + H(+). In terms of biological role, required for accurate and efficient protein synthesis under certain stress conditions. May act as a fidelity factor of the translation reaction, by catalyzing a one-codon backward translocation of tRNAs on improperly translocated ribosomes. Back-translocation proceeds from a post-translocation (POST) complex to a pre-translocation (PRE) complex, thus giving elongation factor G a second chance to translocate the tRNAs correctly. Binds to ribosomes in a GTP-dependent manner. This chain is Elongation factor 4, found in Rhodopseudomonas palustris (strain BisB18).